A 349-amino-acid polypeptide reads, in one-letter code: tRNA pseudouridine synthase D (349 aa).

Substrate is bound at residue F27. D80 acts as the Nucleophile in catalysis. A substrate-binding site is contributed by N129. The 149-residue stretch at G155–L303 folds into the TRUD domain. F329 is a binding site for substrate.

This sequence belongs to the pseudouridine synthase TruD family.

It catalyses the reaction uridine(13) in tRNA = pseudouridine(13) in tRNA. Functionally, responsible for synthesis of pseudouridine from uracil-13 in transfer RNAs. This is tRNA pseudouridine synthase D from Salmonella typhi.